The sequence spans 87 residues: Large ribosomal subunit protein eL31 (87 aa).

This sequence belongs to the eukaryotic ribosomal protein eL31 family.

This chain is Large ribosomal subunit protein eL31, found in Methanoculleus marisnigri (strain ATCC 35101 / DSM 1498 / JR1).